A 363-amino-acid chain; its full sequence is GDSL esterase/lipase At3g14220 (363 aa).

The signal sequence occupies residues 1–28; the sequence is MAKNRNLVFFLGVLASFTLSSFPVTVSG. The active-site Nucleophile is the S39. Active-site residues include D318 and H321.

The protein belongs to the 'GDSL' lipolytic enzyme family.

It is found in the secreted. This is GDSL esterase/lipase At3g14220 from Arabidopsis thaliana (Mouse-ear cress).